The chain runs to 124 residues: Large ribosomal subunit protein uL14 (124 aa).

It belongs to the universal ribosomal protein uL14 family. Part of the 50S ribosomal subunit. Forms a cluster with proteins L3 and L19. In the 70S ribosome, L14 and L19 interact and together make contacts with the 16S rRNA in bridges B5 and B8.

Functionally, binds to 23S rRNA. Forms part of two intersubunit bridges in the 70S ribosome. The sequence is that of Large ribosomal subunit protein uL14 from Clostridium novyi (strain NT).